The sequence spans 208 residues: Uracil phosphoribosyltransferase (208 aa).

5-phospho-alpha-D-ribose 1-diphosphate contacts are provided by residues Arg78, Arg103, and 130–138 (DPMLATGGS). Uracil contacts are provided by residues Ile193 and 198 to 200 (GDA). Asp199 provides a ligand contact to 5-phospho-alpha-D-ribose 1-diphosphate.

This sequence belongs to the UPRTase family. It depends on Mg(2+) as a cofactor.

It carries out the reaction UMP + diphosphate = 5-phospho-alpha-D-ribose 1-diphosphate + uracil. Its pathway is pyrimidine metabolism; UMP biosynthesis via salvage pathway; UMP from uracil: step 1/1. With respect to regulation, allosterically activated by GTP. Functionally, catalyzes the conversion of uracil and 5-phospho-alpha-D-ribose 1-diphosphate (PRPP) to UMP and diphosphate. The sequence is that of Uracil phosphoribosyltransferase from Glaesserella parasuis serovar 5 (strain SH0165) (Haemophilus parasuis).